We begin with the raw amino-acid sequence, 729 residues long: Neurochondrin (729 aa).

An N-acetylserine modification is found at Ser2. Phosphoserine is present on Ser2. At Ser2 the chain carries N-acetylalanine. S-palmitoyl cysteine attachment occurs at residues Cys3 and Cys4. Residue Arg75 is modified to Asymmetric dimethylarginine. The residue at position 448 (Ser448) is a Phosphoserine.

It belongs to the neurochondrin family. As to quaternary structure, interacts with MCHR1. Interacts with SEMA4C. Interacts with DIAPH1 (via FH3 domain). Interacts with GRM5. In terms of processing, palmitoylated. Palmitoylation by ZDHHC1, ZDHHC3 and ZDHHC11 regulates the association of NCDN with endosome membranes. May also be palmitoylated by ZDHHC7. Abundantly expressed in whole adult brain and in all individual brain regions examined, including spinal cord. Weakly expressed in ovary, testis, fetal brain and small intestine.

It localises to the cytoplasm. The protein resides in the cytosol. It is found in the endosome membrane. The protein localises to the cell projection. Its subcellular location is the dendrite. It localises to the postsynapse. Probably involved in signal transduction in the nervous system, via increasing cell surface localization of GRM5/mGluR5 and positively regulating its signaling. Required for the spatial learning process. Acts as a negative regulator of Ca(2+)-calmodulin-dependent protein kinase 2 (CaMK2) phosphorylation. May play a role in modulating melanin-concentrating hormone-mediated functions via its interaction with MCHR1 that interferes with G protein-coupled signal transduction. May be involved in bone metabolism. May also be involved in neurite outgrowth. The protein is Neurochondrin of Homo sapiens (Human).